Consider the following 70-residue polypeptide: Cold shock protein CspV (70 aa).

The region spanning 7-67 is the CSD domain; it reads GSVKWFNETK…GKKGPQASNV (61 aa).

It is found in the cytoplasm. The chain is Cold shock protein CspV (cspV) from Vibrio cholerae serotype O1 (strain ATCC 39315 / El Tor Inaba N16961).